The primary structure comprises 1014 residues: Klotho (1014 aa).

The first 35 residues, 1-35 (MPASAPPRRPRPPPPSLSLSLLLVLLGLAGRRLRA), serve as a signal peptide directing secretion. Residues 36–983 (EPGDGAQTWA…ECSFFHTRKP (948 aa)) lie on the Extracellular side of the membrane. Glycosyl hydrolase-1 regions lie at residues 59-508 (FQGT…KNGF) and 517-955 (LEGT…SNGF). N-linked (GlcNAc...) asparagine glycans are attached at residues Asn161, Asn285, Asn346, Asn609, Asn614, and Asn696. The helical transmembrane segment at 984 to 1004 (LVAFIAFLFFAFIVSLSLIFY) threads the bilayer. Topologically, residues 1005–1014 (YSKKGRRRYQ) are cytoplasmic.

It belongs to the glycosyl hydrolase 1 family. Klotho subfamily. In terms of assembly, homodimer. Interacts with FGF23 and FGFR1.

Its subcellular location is the cell membrane. The protein localises to the apical cell membrane. It is found in the secreted. The catalysed reaction is a beta-D-glucuronoside + H2O = D-glucuronate + an alcohol. May have weak glycosidase activity towards glucuronylated steroids. However, it lacks essential active site Glu residues at positions 241 and 874, suggesting it may be inactive as a glycosidase in vivo. May be involved in the regulation of calcium and phosphorus homeostasis by inhibiting the synthesis of active vitamin D. Essential factor for the specific interaction between FGF23 and FGFR1. Its function is as follows. The Klotho peptide generated by cleavage of the membrane-bound isoform may be an anti-aging circulating hormone which would extend life span by inhibiting insulin/IGF1 signaling. This chain is Klotho (KL), found in Macaca fascicularis (Crab-eating macaque).